A 320-amino-acid polypeptide reads, in one-letter code: Cytochrome f (320 aa).

An N-terminal signal peptide occupies residues 1–35 (MQNRNTFSWVKEEMTRFISVSIMIYVITRTSISNA). Heme contacts are provided by Y36, C56, C59, and H60. A helical transmembrane segment spans residues 286 to 306 (VQGLLFFLASVILAQIFLVLK).

It belongs to the cytochrome f family. The 4 large subunits of the cytochrome b6-f complex are cytochrome b6, subunit IV (17 kDa polypeptide, petD), cytochrome f and the Rieske protein, while the 4 small subunits are PetG, PetL, PetM and PetN. The complex functions as a dimer. Heme is required as a cofactor.

Its subcellular location is the plastid. The protein resides in the chloroplast thylakoid membrane. Functionally, component of the cytochrome b6-f complex, which mediates electron transfer between photosystem II (PSII) and photosystem I (PSI), cyclic electron flow around PSI, and state transitions. This chain is Cytochrome f, found in Calycanthus floridus var. glaucus (Eastern sweetshrub).